Consider the following 189-residue polypeptide: Small ribosomal subunit protein uS5 (189 aa).

The S5 DRBM domain maps to 23–86 (FIDKLVHINR…ESAKREMIYV (64 aa)).

It belongs to the universal ribosomal protein uS5 family. In terms of assembly, part of the 30S ribosomal subunit. Contacts proteins S4 and S8.

With S4 and S12 plays an important role in translational accuracy. In terms of biological role, located at the back of the 30S subunit body where it stabilizes the conformation of the head with respect to the body. The polypeptide is Small ribosomal subunit protein uS5 (Bartonella bacilliformis (strain ATCC 35685 / KC583 / Herrer 020/F12,63)).